Here is a 414-residue protein sequence, read N- to C-terminus: Probable protein phosphatase 2C 80 (414 aa).

The PPM-type phosphatase domain occupies 174–411; sequence SCYLPHPEKE…DDITAVVSYV (238 aa). Mn(2+)-binding residues include Asp204, Gly205, Asp336, and Asp402.

Belongs to the PP2C family. Mg(2+) serves as cofactor. Mn(2+) is required as a cofactor.

The catalysed reaction is O-phospho-L-seryl-[protein] + H2O = L-seryl-[protein] + phosphate. It carries out the reaction O-phospho-L-threonyl-[protein] + H2O = L-threonyl-[protein] + phosphate. The protein is Probable protein phosphatase 2C 80 of Arabidopsis thaliana (Mouse-ear cress).